We begin with the raw amino-acid sequence, 2221 residues long: Voltage-dependent L-type calcium channel subunit alpha-1C (2221 aa).

Residues methionine 1–tyrosine 20 are disordered. Over methionine 1–lysine 124 the chain is Cytoplasmic. The calmodulin-binding stretch occupies residues glycine 47–alanine 68. Residues isoleucine 73–threonine 98 are disordered. Over residues glutamine 80–lysine 91 the composition is skewed to basic residues. Residues asparagine 111 to phenylalanine 408 form an I repeat. A helical transmembrane segment spans residues proline 125–isoleucine 143. At tyrosine 144–asparagine 158 the chain is on the extracellular side. N-linked (GlcNAc...) asparagine glycosylation is present at asparagine 153. Residues leucine 159–isoleucine 179 traverse the membrane as a helical segment. Over alanine 180–asparagine 188 the chain is Cytoplasmic. The helical transmembrane segment at alanine 189–serine 209 threads the bilayer. At alanine 210–aspartate 232 the chain is on the extracellular side. The helical transmembrane segment at valine 233–valine 251 threads the bilayer. Residues proline 252–leucine 268 lie on the Cytoplasmic side of the membrane. The chain crosses the membrane as a helical span at residues leucine 269–phenylalanine 290. Over methionine 291–alanine 350 the chain is Extracellular. 2 disulfides stabilise this stretch: cysteine 298-cysteine 326 and cysteine 316-cysteine 332. Asparagine 328 carries an N-linked (GlcNAc...) asparagine glycan. The pore-forming intramembrane region spans phenylalanine 351 to valine 372. The Selectivity filter of repeat I signature appears at threonine 361–glycine 364. Glutamate 363 provides a ligand contact to Ca(2+). At asparagine 373–tryptophan 380 the chain is on the extracellular side. Residues proline 381–leucine 401 form a helical membrane-spanning segment. The Cytoplasmic segment spans residues glycine 402 to asparagine 524. Residues glutamine 428–glutamate 445 form an AID/alpha-interaction domain; mediates interaction with the beta subunit region. Residues proline 449–glycine 481 form a disordered region. Over residues serine 465–asparagine 478 the composition is skewed to polar residues. Serine 469 is modified (phosphoserine). Threonine 476 bears the Phosphothreonine mark. Residues asparagine 510–leucine 756 form an II repeat. The chain crosses the membrane as a helical span at residues valine 525–serine 543. Residues glutamate 544 to glutamate 554 lie on the Extracellular side of the membrane. The chain crosses the membrane as a helical span at residues valine 555 to methionine 575. The Cytoplasmic segment spans residues tyrosine 576–serine 586. The helical transmembrane segment at leucine 587–valine 606 threads the bilayer. The Extracellular segment spans residues glutamate 607–glycine 615. A helical transmembrane segment spans residues isoleucine 616–tryptophan 634. At asparagine 635–serine 653 the chain is on the cytoplasmic side. The chain crosses the membrane as a helical span at residues leucine 654–phenylalanine 673. The Extracellular segment spans residues glycine 674–proline 693. Positions glutamine 694–glycine 715 form an intramembrane region, pore-forming. The Selectivity filter of repeat II signature appears at threonine 704–aspartate 707. Glutamate 706 is a Ca(2+) binding site. The Extracellular portion of the chain corresponds to isoleucine 716–proline 725. The helical transmembrane segment at glycine 726–leucine 745 threads the bilayer. Residues asparagine 746–threonine 900 are Cytoplasmic-facing. A disordered region spans residues serine 764–proline 861. Basic and acidic residues predominate over residues serine 783–glutamate 792. Phosphoserine occurs at positions 808 and 815. Residues asparagine 829–glutamate 876 form an interaction with STAC2 region. Residues threonine 843–glutamate 852 show a composition bias toward acidic residues. Residues asparagine 887 to phenylalanine 1189 form an III repeat. The chain crosses the membrane as a helical span at residues isoleucine 901–alanine 919. At glutamate 920–histidine 931 the chain is on the extracellular side. Residues isoleucine 932 to isoleucine 952 traverse the membrane as a helical segment. Residues leucine 953 to asparagine 987 lie on the Cytoplasmic side of the membrane. The helical transmembrane segment at tyrosine 988–isoleucine 1006 threads the bilayer. Topologically, residues glutamine 1007 to valine 1013 are extracellular. The chain crosses the membrane as a helical span at residues valine 1014–alanine 1032. At lysine 1033–asparagine 1051 the chain is on the cytoplasmic side. A helical membrane pass occupies residues isoleucine 1052 to phenylalanine 1071. Topologically, residues lysine 1072–valine 1121 are extracellular. A disulfide bridge links cysteine 1078 with cysteine 1089. The interval arginine 1109–lysine 1198 is dihydropyridine binding. An intramembrane region (pore-forming) is located at residues leucine 1122–tyrosine 1142. The short motif at threonine 1133–glycine 1136 is the Selectivity filter of repeat III element. Glutamate 1135 contacts Ca(2+). The Extracellular portion of the chain corresponds to arginine 1143–arginine 1159. Residues valine 1160 to phenylalanine 1181 form a helical membrane-spanning segment. The Cytoplasmic segment spans residues valine 1182 to threonine 1239. The IV repeat unit spans residues asparagine 1226–phenylalanine 1527. The chain crosses the membrane as a helical span at residues tyrosine 1240 to tyrosine 1261. The Extracellular segment spans residues glycine 1262–isoleucine 1269. The helical transmembrane segment at alanine 1270–isoleucine 1291 threads the bilayer. Residues alanine 1292–aspartate 1301 lie on the Cytoplasmic side of the membrane. A helical transmembrane segment spans residues proline 1302–serine 1321. The Extracellular segment spans residues glutamate 1322–serine 1372. Residues isoleucine 1373–glycine 1391 traverse the membrane as a helical segment. Residues glutamate 1392 to proline 1409 are Cytoplasmic-facing. Residues tyrosine 1410–phenylalanine 1430 form a helical membrane-spanning segment. The Extracellular segment spans residues glycine 1431–glutamine 1452. Residue asparagine 1436 is glycosylated (N-linked (GlcNAc...) asparagine). The pore-forming intramembrane region spans alanine 1453 to leucine 1471. The Selectivity filter of repeat IV motif lies at threonine 1462–alanine 1465. At alanine 1472 to phenylalanine 1499 the chain is on the extracellular side. The tract at residues lysine 1478–lysine 1546 is dihydropyridine binding. An intrachain disulfide couples cysteine 1479 to cysteine 1495. Asparagine 1487 is a glycosylation site (N-linked (GlcNAc...) asparagine). The phenylalkylamine binding stretch occupies residues glutamate 1492–tryptophan 1534. The helical transmembrane segment at alanine 1500–methionine 1524 threads the bilayer. The Cytoplasmic portion of the chain corresponds to aspartate 1525 to leucine 2221. The important for interaction with STAC1, STAC2 and STAC3 stretch occupies residues aspartate 1659–glycine 1686. Residues lysine 1665–glutamine 1685 are calmodulin-binding IQ region. The tract at residues leucine 1699–serine 1718 is important for localization in at the junctional membrane. Residues serine 1718 and serine 1739 each carry the phosphoserine modification. The disordered stretch occupies residues isoleucine 1778–serine 1847. Polar residues predominate over residues serine 1799–serine 1811. Positions asparagine 1812–alanine 1822 are enriched in low complexity. Position 1981 is a phosphoserine; by PKA (serine 1981). Disordered regions lie at residues alanine 2029–serine 2063 and alanine 2186–leucine 2221.

This sequence belongs to the calcium channel alpha-1 subunit (TC 1.A.1.11) family. CACNA1C subfamily. Component of a calcium channel complex consisting of a pore-forming alpha subunit (CACNA1C) and ancillary beta, gamma and delta subunits. The channel complex contains alpha, beta, gamma and delta subunits in a 1:1:1:1 ratio, i.e. it contains only one of each type of subunit. CACNA1C channel activity is modulated by ancillary subunits, such as CACNB1, CACNB2, CACNB3, CACNA2D1 and CACNA2D4. Interacts with the gamma subunits CACNG4, CACNG6, CACNG7 and CACNG8. Interacts with CACNB1. Interacts with CACNB2. Identified in a complex with CACNA2D4 and CACNB3. Interacts with CACNB3. Interacts with CACNA2D1. Interacts with CACNA2D4. Interacts with CALM1. Interacts (via the N-terminus and the C-terminal C and IQ motifs) with CABP1; this inhibits Ca(2+)-dependent channel inactivation. The binding via the C motif is calcium independent whereas the binding via IQ requires the presence of calcium and is mutually exclusive with calmodulin binding. The binding to the cytoplasmic N-terminal domain is calcium independent but is essential for the channel modulation. Interacts (via C-terminal CDB motif) with CABP5; in a calcium-dependent manner. Interacts with CIB1; the interaction increases upon cardiomyocytes hypertrophy. Interacts with STAC2 and STAC3; this inhibits channel inactivation. In terms of assembly, (Microbial infection) Interacts with influenzavirus H1 hemagglutinin. Phosphorylation by PKA at Ser-1981 activates the channel. Elevated levels of blood glucose lead to increased phosphorylation by PKA. Detected throughout the brain, including hippocampus, cerebellum and amygdala, throughout the heart and vascular system, including ductus arteriosus, in urinary bladder, and in retina and sclera in the eye. Expressed in brain, heart, jejunum, ovary, pancreatic beta-cells and vascular smooth muscle. Overall expression is reduced in atherosclerotic vascular smooth muscle.

It is found in the cell membrane. It localises to the sarcolemma. The protein resides in the perikaryon. Its subcellular location is the postsynaptic density membrane. The protein localises to the cell projection. It is found in the dendrite. It localises to the T-tubule. The catalysed reaction is Ca(2+)(in) = Ca(2+)(out). Inhibited by dihydropyridines (DHP), such as isradipine. Inhibited by nifedipine. Channel activity is regulated by Ca(2+) and calmodulin. Binding of STAC1, STAC2 or STAC3 to a region that overlaps with the calmodulin binding site inhibits channel inactivation by Ca(2+) and calmodulin. Binding of calmodulin or CABP1 at the same regulatory sites results in opposite effects on the channel function. Shear stress and pressure increases calcium channel activity. In terms of biological role, pore-forming, alpha-1C subunit of the voltage-gated calcium channel that gives rise to L-type calcium currents. Mediates influx of calcium ions into the cytoplasm, and thereby triggers calcium release from the sarcoplasm. Plays an important role in excitation-contraction coupling in the heart. Required for normal heart development and normal regulation of heart rhythm. Required for normal contraction of smooth muscle cells in blood vessels and in the intestine. Essential for normal blood pressure regulation via its role in the contraction of arterial smooth muscle cells. Long-lasting (L-type) calcium channels belong to the 'high-voltage activated' (HVA) group. Its function is as follows. Pore-forming, alpha-1C subunit of the voltage-gated calcium channel that gives rise to L-type calcium currents. Functionally, (Microbial infection) Acts as a receptor for Influenzavirus. May play a critical role in allowing virus entry when sialylated and expressed on lung tissues. In Homo sapiens (Human), this protein is Voltage-dependent L-type calcium channel subunit alpha-1C (CACNA1C).